Consider the following 436-residue polypeptide: GTPase Obg (436 aa).

One can recognise an Obg domain in the interval 2–160 (SMFLDTAKIK…RELQLELKIL (159 aa)). The OBG-type G domain occupies 161–338 (ADVGLVGFPS…LLDATAELLD (178 aa)). Residues 167-174 (GFPSVGKS), 192-196 (FTTIV), 214-217 (DLPG), 284-287 (NKMD), and 319-321 (SGL) contribute to the GTP site. Mg(2+) contacts are provided by serine 174 and threonine 194. The region spanning 358–436 (GFDEEEKAFE…IGKFEFEFVD (79 aa)) is the OCT domain.

Belongs to the TRAFAC class OBG-HflX-like GTPase superfamily. OBG GTPase family. As to quaternary structure, monomer. Mg(2+) serves as cofactor.

Its subcellular location is the cytoplasm. Functionally, an essential GTPase which binds GTP, GDP and possibly (p)ppGpp with moderate affinity, with high nucleotide exchange rates and a fairly low GTP hydrolysis rate. Plays a role in control of the cell cycle, stress response, ribosome biogenesis and in those bacteria that undergo differentiation, in morphogenesis control. This chain is GTPase Obg, found in Streptococcus pneumoniae (strain CGSP14).